A 65-amino-acid chain; its full sequence is Large ribosomal subunit protein bL35 (65 aa).

It belongs to the bacterial ribosomal protein bL35 family.

This chain is Large ribosomal subunit protein bL35, found in Rhodospirillum rubrum (strain ATCC 11170 / ATH 1.1.1 / DSM 467 / LMG 4362 / NCIMB 8255 / S1).